The chain runs to 529 residues: Delayed-rectifier potassium channel regulatory subunit KCNS1 (529 aa).

Topologically, residues 1-217 (MLMLLVRGTR…LTMENPGYSL (217 aa)) are cytoplasmic. A helical membrane pass occupies residues 218–239 (PSKLFSCVSISVVLASIAAMCI). Topologically, residues 240-270 (HSLPEYQAREAAAAVAAVAAGRSAEGVRDDP) are extracellular. Residues 271-293 (VLRRLEYFCIAWFSFEVSSRLLL) traverse the membrane as a helical segment. Topologically, residues 294-304 (APSTRNFFCHP) are cytoplasmic. The chain crosses the membrane as a helical span at residues 305-322 (LNLIDIVSVLPFYLTLLA). At 323 to 340 (GAALGDHGGTGGKEFGHL) the chain is on the extracellular side. A helical; Voltage-sensor transmembrane segment spans residues 341 to 361 (GKVVQVFRLMRIFRVLKLARH). The Cytoplasmic segment spans residues 362–376 (STGLRSLGATLKHSY). The helical transmembrane segment at 377 to 398 (REVGILLLYLAVGVSVFSGVAY) threads the bilayer. The Extracellular segment spans residues 399–411 (TAEKEEHVGFDTI). Positions 412–423 (PACWWWGTVSMT) form an intramembrane region, helical. Positions 424–429 (TVGYGD) match the Selectivity filter motif. An intramembrane segment occupies 424-431 (TVGYGDVV). The Extracellular segment spans residues 432-438 (PVTVAGK). A helical membrane pass occupies residues 439-467 (LAASGCILGGILVVALPITIIFNKFSHFY). Residues 468–529 (RRQKALEAAV…PSEPPHSQMY (62 aa)) are Cytoplasmic-facing. The disordered stretch occupies residues 494–529 (GVSEASLETSRETSQEGRSADLETQVPSEPPHSQMY). Basic and acidic residues predominate over residues 502-514 (TSRETSQEGRSAD).

It belongs to the potassium channel family. S (TC 1.A.1.2) subfamily. Kv9.1/KCNS1 sub-subfamily. In terms of assembly, heterotetramer with KCNB1. Heterotetramer with KCNB2. Does not form homomultimers.

It is found in the cell membrane. Its function is as follows. Potassium channel regulatory subunit that modulate the delayed rectifier voltage-gated potassium channel activity of KCNB1 and KCNB2 by altering their kinetics, expression levels, and shifting the half-inactivation potential to more polarized values. While it does not form functional channels on its own, it can form functional heterotetrameric channels with KCNB1 and KCNB2. Each regulatory subunit has unique regulatory properties that can lead to extensive inhibition, significant changes in kinetics, and/or substantial shifts in the voltage dependencies of the inactivation process. The chain is Delayed-rectifier potassium channel regulatory subunit KCNS1 from Aotus nancymaae (Ma's night monkey).